The primary structure comprises 224 residues: Ribose-5-phosphate isomerase A (224 aa).

Substrate contacts are provided by residues 26–29, 81–84, and 94–97; these read TGST, DGAD, and KGGG. The active-site Proton acceptor is glutamate 103. Substrate is bound at residue lysine 121.

This sequence belongs to the ribose 5-phosphate isomerase family. As to quaternary structure, homodimer.

The catalysed reaction is aldehydo-D-ribose 5-phosphate = D-ribulose 5-phosphate. It functions in the pathway carbohydrate degradation; pentose phosphate pathway; D-ribose 5-phosphate from D-ribulose 5-phosphate (non-oxidative stage): step 1/1. In terms of biological role, catalyzes the reversible conversion of ribose-5-phosphate to ribulose 5-phosphate. The sequence is that of Ribose-5-phosphate isomerase A from Listeria innocua serovar 6a (strain ATCC BAA-680 / CLIP 11262).